The primary structure comprises 396 residues: Elongation factor Tu (396 aa).

The 197-residue stretch at 10–206 (KPHCNIGTIG…AVDAYIPQPE (197 aa)) folds into the tr-type G domain. The interval 19–26 (GHVDHGKT) is G1. 19–26 (GHVDHGKT) lines the GTP pocket. Thr26 serves as a coordination point for Mg(2+). Residues 60–64 (GITIS) form a G2 region. The segment at 81-84 (DCPG) is G3. Residues 81–85 (DCPGH) and 136–139 (NKVD) contribute to the GTP site. The segment at 136–139 (NKVD) is G4. A G5 region spans residues 174 to 176 (SAL).

It belongs to the TRAFAC class translation factor GTPase superfamily. Classic translation factor GTPase family. EF-Tu/EF-1A subfamily. As to quaternary structure, monomer.

It localises to the cytoplasm. The catalysed reaction is GTP + H2O = GDP + phosphate + H(+). Its function is as follows. GTP hydrolase that promotes the GTP-dependent binding of aminoacyl-tRNA to the A-site of ribosomes during protein biosynthesis. The protein is Elongation factor Tu of Granulibacter bethesdensis (strain ATCC BAA-1260 / CGDNIH1).